A 310-amino-acid chain; its full sequence is Olfactory receptor 2A7 (310 aa).

The Extracellular portion of the chain corresponds to 1–24 (MGDNITSITEFLLLGFPVGPRIQM). A glycan (N-linked (GlcNAc...) asparagine) is linked at N4. Residues 25 to 48 (LLFGLFSLFYVFTLLGNGTILGLI) form a helical membrane-spanning segment. Residues 49-56 (SLDSRLHA) are Cytoplasmic-facing. The chain crosses the membrane as a helical span at residues 57–78 (PMYFFLSHLAVVDIAYACNTVP). Residues 79-99 (RMLVNLLHPAKPISFAGRMMQ) are Extracellular-facing. Residues 100 to 119 (TFLFSTFAVTECLLLVVMSY) traverse the membrane as a helical segment. Residues 120-138 (DLYVAICHPLRYLAIMTWR) lie on the Cytoplasmic side of the membrane. Residues 139 to 157 (VCITLAVTSWTTGVLLSLI) form a helical membrane-spanning segment. At 158-194 (HLVLLLPLPFCRPQKIYHFFCEILAVLKLACADTHIN) the chain is on the extracellular side. Residues 195 to 218 (ENMVLAGAISGLVGPLSTIVVSYM) traverse the membrane as a helical segment. The Cytoplasmic portion of the chain corresponds to 219–235 (CILCAILQIQSREVQRK). A helical membrane pass occupies residues 236 to 258 (AFCTCFSHLCVIGLFYGTAIIMY). The Extracellular portion of the chain corresponds to 259–271 (VGPRYGNPKEQKK). The chain crosses the membrane as a helical span at residues 272-291 (YLLLFHSLFNPMLNPLICSL). The Cytoplasmic segment spans residues 292–310 (RNSEVKNTLKRVLGVERAL).

It belongs to the G-protein coupled receptor 1 family.

Its subcellular location is the cell membrane. Odorant receptor. The protein is Olfactory receptor 2A7 (OR2A7) of Homo sapiens (Human).